Here is a 401-residue protein sequence, read N- to C-terminus: Argininosuccinate synthase (401 aa).

Residue 9–17 (AYSGGLDTS) participates in ATP binding. Residue Y86 participates in L-citrulline binding. G116 serves as a coordination point for ATP. L-aspartate is bound by residues T118, N122, and D123. N122 is an L-citrulline binding site. The L-citrulline site is built by R126, S174, S183, E259, and Y271.

Belongs to the argininosuccinate synthase family. Type 1 subfamily. As to quaternary structure, homotetramer.

The protein resides in the cytoplasm. The catalysed reaction is L-citrulline + L-aspartate + ATP = 2-(N(omega)-L-arginino)succinate + AMP + diphosphate + H(+). The protein operates within amino-acid biosynthesis; L-arginine biosynthesis; L-arginine from L-ornithine and carbamoyl phosphate: step 2/3. This Bacillus cereus (strain B4264) protein is Argininosuccinate synthase.